We begin with the raw amino-acid sequence, 354 residues long: S-adenosylmethionine:tRNA ribosyltransferase-isomerase (354 aa).

The protein belongs to the QueA family. As to quaternary structure, monomer.

The protein localises to the cytoplasm. It catalyses the reaction 7-aminomethyl-7-carbaguanosine(34) in tRNA + S-adenosyl-L-methionine = epoxyqueuosine(34) in tRNA + adenine + L-methionine + 2 H(+). It functions in the pathway tRNA modification; tRNA-queuosine biosynthesis. Functionally, transfers and isomerizes the ribose moiety from AdoMet to the 7-aminomethyl group of 7-deazaguanine (preQ1-tRNA) to give epoxyqueuosine (oQ-tRNA). The chain is S-adenosylmethionine:tRNA ribosyltransferase-isomerase from Pseudomonas savastanoi pv. phaseolicola (strain 1448A / Race 6) (Pseudomonas syringae pv. phaseolicola (strain 1448A / Race 6)).